A 262-amino-acid polypeptide reads, in one-letter code: Cytochrome c oxidase subunit 3 (262 aa).

A run of 6 helical transmembrane segments spans residues 39 to 59 (YTMTLFILGNIITILTMYQWW), 83 to 103 (GMILFIVSEIFFFISFFWAFF), 120 to 140 (VGIIAFNPFQIPLLNTAILLA), 163 to 183 (GLFFTIVLGIYFSILQAYEYI), 201 to 221 (ATGFHGLHVLIGTTFLLICFL), and 240 to 260 (AWYWHFVDVVWLFLYISIYWW).

This sequence belongs to the cytochrome c oxidase subunit 3 family. Component of the cytochrome c oxidase (complex IV, CIV), a multisubunit enzyme composed of a catalytic core of 3 subunits and several supernumerary subunits. The complex exists as a monomer or a dimer and forms supercomplexes (SCs) in the inner mitochondrial membrane with ubiquinol-cytochrome c oxidoreductase (cytochrome b-c1 complex, complex III, CIII).

It localises to the mitochondrion inner membrane. It carries out the reaction 4 Fe(II)-[cytochrome c] + O2 + 8 H(+)(in) = 4 Fe(III)-[cytochrome c] + 2 H2O + 4 H(+)(out). Its function is as follows. Component of the cytochrome c oxidase, the last enzyme in the mitochondrial electron transport chain which drives oxidative phosphorylation. The respiratory chain contains 3 multisubunit complexes succinate dehydrogenase (complex II, CII), ubiquinol-cytochrome c oxidoreductase (cytochrome b-c1 complex, complex III, CIII) and cytochrome c oxidase (complex IV, CIV), that cooperate to transfer electrons derived from NADH and succinate to molecular oxygen, creating an electrochemical gradient over the inner membrane that drives transmembrane transport and the ATP synthase. Cytochrome c oxidase is the component of the respiratory chain that catalyzes the reduction of oxygen to water. Electrons originating from reduced cytochrome c in the intermembrane space (IMS) are transferred via the dinuclear copper A center (CU(A)) of subunit 2 and heme A of subunit 1 to the active site in subunit 1, a binuclear center (BNC) formed by heme A3 and copper B (CU(B)). The BNC reduces molecular oxygen to 2 water molecules using 4 electrons from cytochrome c in the IMS and 4 protons from the mitochondrial matrix. The polypeptide is Cytochrome c oxidase subunit 3 (COIII) (Anopheles quadrimaculatus (Common malaria mosquito)).